Reading from the N-terminus, the 339-residue chain is Protein pelota homolog (339 aa).

It belongs to the eukaryotic release factor 1 family. Pelota subfamily. Monomer. The cofactor is a divalent metal cation.

It localises to the cytoplasm. Its function is as follows. May function in recognizing stalled ribosomes, interact with stem-loop structures in stalled mRNA molecules, and effect endonucleolytic cleavage of the mRNA. May play a role in the release non-functional ribosomes and degradation of damaged mRNAs. Has endoribonuclease activity. In Thermoplasma acidophilum (strain ATCC 25905 / DSM 1728 / JCM 9062 / NBRC 15155 / AMRC-C165), this protein is Protein pelota homolog (pelA).